The chain runs to 394 residues: MTAANLLEFDLDALAAFCEQLGEKRFRATQLFRWIHQKGQSDFAQMSDLAKSLREKLAGRAVVRPLAVLSEHVSADGTVKWLFDVGGGNAVETVFIPENDRGTLCISSQAGCAVGCRFCSTGHQGFSRNLSTGEIVAQLWHAEHQLRARLGTTERVISNVVMMGMGEPLQNYAALLPALRVMLDDHGYGLSRRRVTVSTSGVVPMIDRLREDCPVALAVSLHAPTDALRDDLVPLNRKYPIAELLEACQRYLEAAPRDFITFEYCMLDGVNDSEAQARELLRLVGERGPVGRVPCKINLIPFNPFPASGLTRSSVARVQAFAQLLVDGGLVTTVRRTRGDDIDAACGQLAGEVQDRTNAQARMRRAPIAIRPIDSAVQRRADAAPSGSATETTR.

The Proton acceptor role is filled by Glu92. A Radical SAM core domain is found at Glu98–Asp341. Cysteines 105 and 346 form a disulfide. Residues Cys112, Cys116, and Cys119 each contribute to the [4Fe-4S] cluster site. Residues Gly166–Glu167, Ser198, Ser220–His222, and Asn303 contribute to the S-adenosyl-L-methionine site. Cys346 serves as the catalytic S-methylcysteine intermediate. The segment at Asp374–Arg394 is disordered.

The protein belongs to the radical SAM superfamily. RlmN family. Requires [4Fe-4S] cluster as cofactor.

It localises to the cytoplasm. The enzyme catalyses adenosine(2503) in 23S rRNA + 2 reduced [2Fe-2S]-[ferredoxin] + 2 S-adenosyl-L-methionine = 2-methyladenosine(2503) in 23S rRNA + 5'-deoxyadenosine + L-methionine + 2 oxidized [2Fe-2S]-[ferredoxin] + S-adenosyl-L-homocysteine. It carries out the reaction adenosine(37) in tRNA + 2 reduced [2Fe-2S]-[ferredoxin] + 2 S-adenosyl-L-methionine = 2-methyladenosine(37) in tRNA + 5'-deoxyadenosine + L-methionine + 2 oxidized [2Fe-2S]-[ferredoxin] + S-adenosyl-L-homocysteine. Functionally, specifically methylates position 2 of adenine 2503 in 23S rRNA and position 2 of adenine 37 in tRNAs. m2A2503 modification seems to play a crucial role in the proofreading step occurring at the peptidyl transferase center and thus would serve to optimize ribosomal fidelity. The sequence is that of Dual-specificity RNA methyltransferase RlmN from Methylibium petroleiphilum (strain ATCC BAA-1232 / LMG 22953 / PM1).